Reading from the N-terminus, the 126-residue chain is Protein ApaG (126 aa).

Positions A2–H126 constitute an ApaG domain.

This Chromobacterium violaceum (strain ATCC 12472 / DSM 30191 / JCM 1249 / CCUG 213 / NBRC 12614 / NCIMB 9131 / NCTC 9757 / MK) protein is Protein ApaG.